The following is an 84-amino-acid chain: MSILSFLLGEKKKSASVAKERLQLIIAHERAGGHAPADYLPALQRELVAVISKYVKISHDDIRVSLERQDDLEVLEVKIEIPQA.

It belongs to the MinE family.

Prevents the cell division inhibition by proteins MinC and MinD at internal division sites while permitting inhibition at polar sites. This ensures cell division at the proper site by restricting the formation of a division septum at the midpoint of the long axis of the cell. The protein is Cell division topological specificity factor of Paraburkholderia phytofirmans (strain DSM 17436 / LMG 22146 / PsJN) (Burkholderia phytofirmans).